Here is a 419-residue protein sequence, read N- to C-terminus: Light-independent protochlorophyllide reductase subunit N (419 aa).

Residues C20, C45, and C102 each coordinate [4Fe-4S] cluster.

The protein belongs to the BchN/ChlN family. In terms of assembly, protochlorophyllide reductase is composed of three subunits; BchL, BchN and BchB. Forms a heterotetramer of two BchB and two BchN subunits. Requires [4Fe-4S] cluster as cofactor.

It catalyses the reaction chlorophyllide a + oxidized 2[4Fe-4S]-[ferredoxin] + 2 ADP + 2 phosphate = protochlorophyllide a + reduced 2[4Fe-4S]-[ferredoxin] + 2 ATP + 2 H2O. Its pathway is porphyrin-containing compound metabolism; bacteriochlorophyll biosynthesis (light-independent). Functionally, component of the dark-operative protochlorophyllide reductase (DPOR) that uses Mg-ATP and reduced ferredoxin to reduce ring D of protochlorophyllide (Pchlide) to form chlorophyllide a (Chlide). This reaction is light-independent. The NB-protein (BchN-BchB) is the catalytic component of the complex. The chain is Light-independent protochlorophyllide reductase subunit N from Chlorobaculum tepidum (strain ATCC 49652 / DSM 12025 / NBRC 103806 / TLS) (Chlorobium tepidum).